The primary structure comprises 410 residues: Retrovirus-related Pol polyprotein from type-1 retrotransposable element R1 2 (410 aa).

The Reverse transcriptase domain occupies 1-118; that stretch reads GCPQGSIGGP…SCFRYLGVNV (118 aa). Residues 254–410 are nucleic acid-binding endonuclease; that stretch reads SSVIKLERLV…RLNLELDVNG (157 aa).

The catalysed reaction is DNA(n) + a 2'-deoxyribonucleoside 5'-triphosphate = DNA(n+1) + diphosphate. The protein is Retrovirus-related Pol polyprotein from type-1 retrotransposable element R1 2 of Nasonia vitripennis (Parasitic wasp).